We begin with the raw amino-acid sequence, 141 residues long: Putative pre-16S rRNA nuclease (141 aa).

Belongs to the YqgF nuclease family.

It localises to the cytoplasm. In terms of biological role, could be a nuclease involved in processing of the 5'-end of pre-16S rRNA. The sequence is that of Putative pre-16S rRNA nuclease from Vibrio parahaemolyticus serotype O3:K6 (strain RIMD 2210633).